The chain runs to 211 residues: tRNA (guanine-N(7)-)-methyltransferase (211 aa).

4 residues coordinate S-adenosyl-L-methionine: E43, D68, N95, and N117. Substrate is bound by residues K121, D153, and 190 to 193; that span reads TEYE.

The protein belongs to the class I-like SAM-binding methyltransferase superfamily. TrmB family.

It carries out the reaction guanosine(46) in tRNA + S-adenosyl-L-methionine = N(7)-methylguanosine(46) in tRNA + S-adenosyl-L-homocysteine. It participates in tRNA modification; N(7)-methylguanine-tRNA biosynthesis. Its function is as follows. Catalyzes the formation of N(7)-methylguanine at position 46 (m7G46) in tRNA. The protein is tRNA (guanine-N(7)-)-methyltransferase of Clostridium kluyveri (strain ATCC 8527 / DSM 555 / NBRC 12016 / NCIMB 10680 / K1).